The following is a 643-amino-acid chain: Very long-chain fatty acid transport protein (643 aa).

The Cytoplasmic segment spans residues 1–15 (MACMHQAQLYNDLEE). Residues 16-36 (LLTGPSVPIVAGAAGAAALTA) form a helical membrane-spanning segment. The Extracellular segment spans residues 37–138 (YINAKYHIAH…AIDGGNSAEH (102 aa)). The chain crosses the membrane as a helical span at residues 139–159 (LMLWLALDAIGAATSFLNWNL). Residues 160–249 (TGAGLIHCIK…TGLPKGVFIS (90 aa)) lie on the Cytoplasmic side of the membrane. 235 to 246 (YTSGTTGLPKGV) provides a ligand contact to ATP. An intramembrane segment occupies 250-318 (TGRELRTDWS…FWPEVVASEA (69 aa)). Topologically, residues 319 to 643 (NIIQYVGELG…QGIVDKRIRL (325 aa)) are cytoplasmic. The short motif at 477 to 525 (DLWFKSGDMLRQDAEGRVYFVDRLGDTFRWKSENVSTNEVADVMGTFPQ) is the FACS element.

It belongs to the ATP-dependent AMP-binding enzyme family.

It is found in the lipid droplet. The protein resides in the cell membrane. Its subcellular location is the peroxisome membrane. The protein localises to the peroxisome. It carries out the reaction a very long-chain fatty acid + ATP + CoA = a very long-chain fatty acyl-CoA + AMP + diphosphate. Functionally, acyl-CoA synthetase required for both the import of long chain fatty acids (LCFAs) (C14-C18) and the activation very long chain fatty acids (VLCFAs) (C20-C26) by esterification of the fatty acids into metabolically active CoA-thioesters for subsequent degradation or incorporation into phospholipids. The transport and fatty acyl-CoA synthetase activities are genetically separable and are thus independent activities. Esterifies VLCFAs in the peroxisome matrix. The VLCFAs are actively transported into peroxisomes by a PXA1-PXA2 heterodimeric transporter in the peroxisomal membrane. The protein is Very long-chain fatty acid transport protein (FAT1) of Cochliobolus heterostrophus (Southern corn leaf blight fungus).